Here is a 74-residue protein sequence, read N- to C-terminus: CLAVATA3/ESR (CLE)-related protein 1 (74 aa).

An N-terminal signal peptide occupies residues 1–22 (MANLKFLLCLFLICVSLSRSSA). Asn59 carries an N-linked (GlcNAc...) asparagine glycan. Pro66 and Pro69 each carry hydroxyproline. Pro69 carries an O-linked (Ara...) hydroxyproline glycan.

It belongs to the CLV3/ESR signal peptide family. Post-translationally, the O-glycosylation (arabinosylation) of the hydroxyproline Pro-69 enhances binding affinity of the CLE1p peptide for its receptor. As to expression, mostly expressed in roots and seedlings, and, to a lower extent, in stems and apex.

It is found in the secreted. The protein resides in the extracellular space. In terms of biological role, extracellular signal peptide that regulates cell fate. In Arabidopsis thaliana (Mouse-ear cress), this protein is CLAVATA3/ESR (CLE)-related protein 1.